The chain runs to 194 residues: Thymidine kinase (194 aa).

ATP is bound by residues 15 to 22 (GSMFSGKS) and 88 to 91 (DEVQ). Glu-89 serves as the catalytic Proton acceptor. Residues Cys-145, Cys-148, Cys-183, and Cys-186 each contribute to the Zn(2+) site.

It belongs to the thymidine kinase family. In terms of assembly, homotetramer.

Its subcellular location is the cytoplasm. The enzyme catalyses thymidine + ATP = dTMP + ADP + H(+). The sequence is that of Thymidine kinase from Bacillus anthracis (strain A0248).